The chain runs to 285 residues: GPN-loop GTPase 3 (285 aa).

Residue 13-18 participates in GTP binding; it reads GSGKST. A Gly-Pro-Asn (GPN)-loop; involved in dimer interface motif is present at residues 72-74; it reads GPN. 174-177 is a binding site for GTP; sequence TKMD. The tract at residues 262–285 is disordered; sequence EPKEVDEEPSNSNFDAFFQDTADS.

The protein belongs to the GPN-loop GTPase family. In terms of assembly, heterodimer with gpn1. Binds to RNA polymerase II (RNAPII).

In terms of biological role, small GTPase required for proper localization of RNA polymerase II (RNAPII). May act at an RNAP assembly step prior to nuclear import. The protein is GPN-loop GTPase 3 of Danio rerio (Zebrafish).